A 704-amino-acid chain; its full sequence is Polyribonucleotide nucleotidyltransferase (704 aa).

Residues Asp-487 and Asp-493 each contribute to the Mg(2+) site. The KH domain maps to 554–613 (PRLLTIKIHPDKIREVIGKGGSTIQAITKETGTQIDIQDDGTIIIASVNAIAAQAAKSRI). The S1 motif domain maps to 623 to 691 (GRIYEGKVAK…KQGRIRLSIK (69 aa)).

Belongs to the polyribonucleotide nucleotidyltransferase family. In terms of assembly, component of the RNA degradosome, which is a multiprotein complex involved in RNA processing and mRNA degradation. Requires Mg(2+) as cofactor.

Its subcellular location is the cytoplasm. The catalysed reaction is RNA(n+1) + phosphate = RNA(n) + a ribonucleoside 5'-diphosphate. In terms of biological role, involved in mRNA degradation. Catalyzes the phosphorolysis of single-stranded polyribonucleotides processively in the 3'- to 5'-direction. This Xanthomonas campestris pv. campestris (strain B100) protein is Polyribonucleotide nucleotidyltransferase.